A 234-amino-acid chain; its full sequence is Phycobilisome rod-core linker polypeptide cpcG (234 aa).

Residues Ser11–Arg191 form the PBS-linker domain.

It belongs to the phycobilisome linker protein family. As to quaternary structure, the phycobilisome is a hemidiscoidal structure that is composed of two distinct substructures: a core complex and a number of rods radiating from the core.

It is found in the plastid. It localises to the chloroplast thylakoid membrane. Functionally, rod-core linker protein required for attachment of phycocyanin to allophycocyanin in cores of phycobilisomes. Its function is as follows. Linker polypeptides determine the state of aggregation and the location of the disk-shaped phycobiliprotein units within the phycobilisome and modulate their spectroscopic properties in order to mediate a directed and optimal energy transfer. This chain is Phycobilisome rod-core linker polypeptide cpcG (cpcG), found in Cyanidium caldarium (Red alga).